We begin with the raw amino-acid sequence, 633 residues long: DNA mismatch repair protein MutL (633 aa).

A disordered region spans residues 338–407 (AAPEPERTLP…VPPPTLRAIP (70 aa)). The span at 366–391 (PGSAFPAAARPAPASSAAQPPLSSSA) shows a compositional bias: low complexity.

The protein belongs to the DNA mismatch repair MutL/HexB family.

In terms of biological role, this protein is involved in the repair of mismatches in DNA. It is required for dam-dependent methyl-directed DNA mismatch repair. May act as a 'molecular matchmaker', a protein that promotes the formation of a stable complex between two or more DNA-binding proteins in an ATP-dependent manner without itself being part of a final effector complex. The sequence is that of DNA mismatch repair protein MutL from Akkermansia muciniphila (strain ATCC BAA-835 / DSM 22959 / JCM 33894 / BCRC 81048 / CCUG 64013 / CIP 107961 / Muc).